A 156-amino-acid polypeptide reads, in one-letter code: Protein-export protein SecB (156 aa).

This sequence belongs to the SecB family. As to quaternary structure, homotetramer, a dimer of dimers. One homotetramer interacts with 1 SecA dimer.

The protein resides in the cytoplasm. One of the proteins required for the normal export of preproteins out of the cell cytoplasm. It is a molecular chaperone that binds to a subset of precursor proteins, maintaining them in a translocation-competent state. It also specifically binds to its receptor SecA. This chain is Protein-export protein SecB, found in Aliivibrio fischeri (strain ATCC 700601 / ES114) (Vibrio fischeri).